A 279-amino-acid polypeptide reads, in one-letter code: Inhibitor of growth protein 1 (279 aa).

The tract at residues 115 to 206 (AHQDISDGTG…EASPADLPID (92 aa)) is disordered. Residue Lys-135 forms a Glycyl lysine isopeptide (Lys-Gly) (interchain with G-Cter in SUMO2) linkage. The span at 154–171 (RNNENRENASNNHDHDDI) shows a compositional bias: basic and acidic residues. Positions 179–191 (KKAKTSKKKKRSK) are enriched in basic residues. The PHD-type zinc finger occupies 210-259 (PTYCLCNQVSYGEMIGCDNDECPIEWFHFSCVGLNHKPKGKWYCPKCRGE). 8 residues coordinate Zn(2+): Cys-213, Cys-215, Cys-226, Cys-231, His-237, Cys-240, Cys-253, and Cys-256. Positions 262 to 279 (KTMDKALEKSKKERAYNR) are PBR.

The protein belongs to the ING family. As to quaternary structure, interacts with H3K4me3 and to a lesser extent with H3K4me2. Isoform 2 interacts with RSL1D1. In the adult, widely expressed with highest levels in thymus and testis.

It is found in the nucleus. Isoform 1 inhibits p53-dependent transcriptional activation and may function as an oncoprotein. Isoform 2 acts as a negative growth regulator by cooperating with p53 in transcriptional activation of p53-responsive genes and may act as a tumor suppressor. In Mus musculus (Mouse), this protein is Inhibitor of growth protein 1 (Ing1).